We begin with the raw amino-acid sequence, 188 residues long: Cytochrome c oxidase assembly protein CtaG (188 aa).

Residues 1-8 (MSKKSNKN) lie on the Cytoplasmic side of the membrane. The chain crosses the membrane as a helical; Signal-anchor for type II membrane protein span at residues 9–31 (LAFSLLGLIISMVLLSFASVPIY). Over 32 to 188 (NLFCKVTGYG…SSLRGNYVSN (157 aa)) the chain is Periplasmic.

This sequence belongs to the COX11/CtaG family.

It localises to the cell inner membrane. Exerts its effect at some terminal stage of cytochrome c oxidase synthesis, probably by being involved in the insertion of the copper B into subunit I. This chain is Cytochrome c oxidase assembly protein CtaG, found in Rickettsia conorii (strain ATCC VR-613 / Malish 7).